The sequence spans 477 residues: Aspartyl/glutamyl-tRNA(Asn/Gln) amidotransferase subunit B (477 aa).

This sequence belongs to the GatB/GatE family. GatB subfamily. Heterotrimer of A, B and C subunits.

The enzyme catalyses L-glutamyl-tRNA(Gln) + L-glutamine + ATP + H2O = L-glutaminyl-tRNA(Gln) + L-glutamate + ADP + phosphate + H(+). The catalysed reaction is L-aspartyl-tRNA(Asn) + L-glutamine + ATP + H2O = L-asparaginyl-tRNA(Asn) + L-glutamate + ADP + phosphate + 2 H(+). Functionally, allows the formation of correctly charged Asn-tRNA(Asn) or Gln-tRNA(Gln) through the transamidation of misacylated Asp-tRNA(Asn) or Glu-tRNA(Gln) in organisms which lack either or both of asparaginyl-tRNA or glutaminyl-tRNA synthetases. The reaction takes place in the presence of glutamine and ATP through an activated phospho-Asp-tRNA(Asn) or phospho-Glu-tRNA(Gln). The protein is Aspartyl/glutamyl-tRNA(Asn/Gln) amidotransferase subunit B of Lactococcus lactis subsp. cremoris (strain SK11).